A 136-amino-acid polypeptide reads, in one-letter code: Large ribosomal subunit protein uL22 (136 aa).

Belongs to the universal ribosomal protein uL22 family. In terms of assembly, part of the 50S ribosomal subunit.

Its function is as follows. This protein binds specifically to 23S rRNA; its binding is stimulated by other ribosomal proteins, e.g. L4, L17, and L20. It is important during the early stages of 50S assembly. It makes multiple contacts with different domains of the 23S rRNA in the assembled 50S subunit and ribosome. The globular domain of the protein is located near the polypeptide exit tunnel on the outside of the subunit, while an extended beta-hairpin is found that lines the wall of the exit tunnel in the center of the 70S ribosome. The protein is Large ribosomal subunit protein uL22 of Bacteroides thetaiotaomicron (strain ATCC 29148 / DSM 2079 / JCM 5827 / CCUG 10774 / NCTC 10582 / VPI-5482 / E50).